We begin with the raw amino-acid sequence, 215 residues long: Uracil-DNA glycosylase (215 aa).

The active-site Proton acceptor is Asp-59.

The protein belongs to the uracil-DNA glycosylase (UDG) superfamily. UNG family.

The protein localises to the cytoplasm. The catalysed reaction is Hydrolyzes single-stranded DNA or mismatched double-stranded DNA and polynucleotides, releasing free uracil.. Its function is as follows. Excises uracil residues from the DNA which can arise as a result of misincorporation of dUMP residues by DNA polymerase or due to deamination of cytosine. This chain is Uracil-DNA glycosylase, found in Aliarcobacter butzleri (strain RM4018) (Arcobacter butzleri).